Consider the following 341-residue polypeptide: Very-long-chain 3-oxoacyl-CoA reductase (341 aa).

A helical membrane pass occupies residues 22–42 (AIYGFLLAGVAAFAAPIVSTI). The NADP(+) site is built by leucine 67, aspartate 123, aspartate 131, asparagine 150, tyrosine 217, lysine 221, isoleucine 250, and threonine 252. Tyrosine 217 functions as the Proton donor in the catalytic mechanism. Catalysis depends on lysine 221, which acts as the Lowers pKa of active site Tyr.

It belongs to the short-chain dehydrogenases/reductases (SDR) family.

The protein resides in the endoplasmic reticulum membrane. It carries out the reaction a very-long-chain (3R)-3-hydroxyacyl-CoA + NADP(+) = a very-long-chain 3-oxoacyl-CoA + NADPH + H(+). Its pathway is lipid metabolism; fatty acid biosynthesis. Component of the microsomal membrane bound fatty acid elongation system, which produces the 26-carbon very long-chain fatty acids (VLCFA) from palmitate. Catalyzes the reduction of the 3-ketoacyl-CoA intermediate that is formed in each cycle of fatty acid elongation. VLCFAs serve as precursors for ceramide and sphingolipids. The polypeptide is Very-long-chain 3-oxoacyl-CoA reductase (Phaeosphaeria nodorum (strain SN15 / ATCC MYA-4574 / FGSC 10173) (Glume blotch fungus)).